Here is a 120-residue protein sequence, read N- to C-terminus: MANPHQIYRHDAAWDRQVFRSLATSLILHGHIKTTLDRAKRLRSVVEKLITKAKKNDLAARRQILSFLYGLKTRDGVKVMPYLFNKVAPRYQERNGGYTRIVRIPSRLGDNSKMAIIELV.

This sequence belongs to the bacterial ribosomal protein bL17 family. Part of the 50S ribosomal subunit. Contacts protein L32.

The polypeptide is Large ribosomal subunit protein bL17 (Mesomycoplasma hyopneumoniae (strain J / ATCC 25934 / NCTC 10110) (Mycoplasma hyopneumoniae)).